Here is a 252-residue protein sequence, read N- to C-terminus: DNA repair protein RecO (252 aa).

Belongs to the RecO family.

In terms of biological role, involved in DNA repair and RecF pathway recombination. The polypeptide is DNA repair protein RecO (Rhodospirillum rubrum (strain ATCC 11170 / ATH 1.1.1 / DSM 467 / LMG 4362 / NCIMB 8255 / S1)).